The primary structure comprises 154 residues: Aspartate carbamoyltransferase regulatory chain (154 aa).

4 residues coordinate Zn(2+): Cys109, Cys114, Cys138, and Cys141.

The protein belongs to the PyrI family. In terms of assembly, contains catalytic and regulatory chains. It depends on Zn(2+) as a cofactor.

Involved in allosteric regulation of aspartate carbamoyltransferase. The sequence is that of Aspartate carbamoyltransferase regulatory chain from Serratia proteamaculans (strain 568).